A 160-amino-acid polypeptide reads, in one-letter code: CXXC motif containing zinc binding protein (160 aa).

Zn(2+)-binding residues include C33, C36, C67, and C70. A Phosphoserine modification is found at S75.

It belongs to the UPF0587 family. Monomer.

This is CXXC motif containing zinc binding protein from Rattus norvegicus (Rat).